Here is a 55-residue protein sequence, read N- to C-terminus: Photosystem II reaction center protein K (55 aa).

Positions 1–18 are excised as a propeptide; it reads MFNIYLENAFYLNGITFA. A helical transmembrane segment spans residues 26–46; it reads IFDPIVDVMPIIPLFFFLLAF.

This sequence belongs to the PsbK family. PSII is composed of 1 copy each of membrane proteins PsbA, PsbB, PsbC, PsbD, PsbE, PsbF, PsbH, PsbI, PsbJ, PsbK, PsbL, PsbM, PsbT, PsbX, PsbY, PsbZ, Psb30/Ycf12, at least 3 peripheral proteins of the oxygen-evolving complex and a large number of cofactors. It forms dimeric complexes.

Its subcellular location is the plastid. It is found in the chloroplast thylakoid membrane. In terms of biological role, one of the components of the core complex of photosystem II (PSII). PSII is a light-driven water:plastoquinone oxidoreductase that uses light energy to abstract electrons from H(2)O, generating O(2) and a proton gradient subsequently used for ATP formation. It consists of a core antenna complex that captures photons, and an electron transfer chain that converts photonic excitation into a charge separation. The sequence is that of Photosystem II reaction center protein K from Marchantia polymorpha (Common liverwort).